The following is a 561-amino-acid chain: Putative transport protein YbjL (561 aa).

5 helical membrane-spanning segments follow: residues 8-28, 32-52, 66-86, 94-114, and 158-178; these read LLNG…LCLG, LGSV…LLGQ, FMLF…SIFF, MLAL…GKLF, and NLSL…IVGA. RCK C-terminal domains are found at residues 200–288 and 292–373; these read RGLD…SFRN and VFDR…RIGF. Helical transmembrane passes span 383 to 403, 406 to 426, 447 to 467, 475 to 495, and 540 to 560; these read LLAF…TFQF, FSFG…LGFL, FGLM…ISNG, MLIA…LFGA, and AIAN…WPGL.

This sequence belongs to the AAE transporter (TC 2.A.81) family. YbjL subfamily.

It localises to the cell membrane. The chain is Putative transport protein YbjL from Salmonella agona (strain SL483).